Reading from the N-terminus, the 247-residue chain is Eukaryotic translation initiation factor 6 (247 aa).

Serine 174 and serine 175 each carry phosphoserine; by CK1.

This sequence belongs to the eIF-6 family. In terms of assembly, monomer. Associates with the 60S ribosomal subunit. Phosphorylation at Ser-174 and Ser-175 promotes nuclear export.

Its subcellular location is the cytoplasm. The protein resides in the nucleus. It is found in the nucleolus. Its function is as follows. Binds to the 60S ribosomal subunit and prevents its association with the 40S ribosomal subunit to form the 80S initiation complex in the cytoplasm. Is also involved in ribosome biogenesis. Associates with pre-60S subunits in the nucleus and is involved in its nuclear export. The sequence is that of Eukaryotic translation initiation factor 6 (tif6) from Aspergillus oryzae (strain ATCC 42149 / RIB 40) (Yellow koji mold).